The sequence spans 312 residues: Deoxycytidylate deaminase (312 aa).

The region spanning 162–291 is the CMP/dCMP-type deaminase domain; it reads SWDSYFMKLA…RMDEESFKVL (130 aa). Residue His-233 participates in Zn(2+) binding. Catalysis depends on Glu-235, which acts as the Proton donor. 2 residues coordinate Zn(2+): Cys-260 and Cys-263.

The protein belongs to the cytidine and deoxycytidylate deaminase family. Zn(2+) serves as cofactor.

The catalysed reaction is dCMP + H2O + H(+) = dUMP + NH4(+). Allosteric enzyme whose activity is greatly influenced by the end products of its metabolic pathway, dCTP and dTTP. In terms of biological role, catalyzes the hydrolytic deamination of dCMP to yield dUMP, the nucleotide substrate for thymidylate synthetase. In Saccharomyces cerevisiae (strain ATCC 204508 / S288c) (Baker's yeast), this protein is Deoxycytidylate deaminase.